The sequence spans 177 residues: Large ribosomal subunit protein uL16 (177 aa).

It belongs to the universal ribosomal protein uL16 family. As to quaternary structure, part of the 50S ribosomal subunit. Weakly binds 5S rRNA. Probably binds the A and P site tRNAs.

Its function is as follows. This is 1 of 5 proteins that mediate the attachment of the 5S rRNA onto the large ribosomal subunit, stabilizing the orientation of adjacent RNA domains. Modeling places the A and P site tRNAs in close proximity to this protein. This is Large ribosomal subunit protein uL16 from Haloarcula marismortui (strain ATCC 43049 / DSM 3752 / JCM 8966 / VKM B-1809) (Halobacterium marismortui).